The primary structure comprises 1005 residues: Espin-like protein (1005 aa).

9 ANK repeats span residues Met1–Ile31, Leu35–Asn64, Asn69–Asp99, Ser103–Leu132, Glu136–Arg166, Ser170–Leu200, Asp204–Ala234, Glu238–Arg267, and Trp270–Leu299. 2 disordered regions span residues Leu333–Gln444 and Leu462–Ala483. A compositionally biased stretch (pro residues) spans Met334–Leu346. Residues Ala468–Thr480 show a composition bias toward polar residues. Residues Leu517 to Leu541 are a coiled coil. 3 disordered regions span residues Gly616–Gln644, Arg695–Gly730, and Leu773–Gly795.

Interacts with MYO3A (via C-terminus). Interacts with MYO3B (via C-terminus).

Its subcellular location is the cell projection. The protein resides in the stereocilium. Binds to but does not cross-link actin. Required for the formation and maintenance of inner ear hair cell stereocilia and staircase formation. Essential for normal hearing. The sequence is that of Espin-like protein (ESPNL) from Homo sapiens (Human).